The sequence spans 370 residues: Chorismate synthase (370 aa).

Arg-47 provides a ligand contact to NADP(+). Residues 124–126 (RSS), Gly-286, 301–305 (KPTAT), and Arg-327 contribute to the FMN site.

The protein belongs to the chorismate synthase family. As to quaternary structure, homotetramer. It depends on FMNH2 as a cofactor.

It catalyses the reaction 5-O-(1-carboxyvinyl)-3-phosphoshikimate = chorismate + phosphate. It functions in the pathway metabolic intermediate biosynthesis; chorismate biosynthesis; chorismate from D-erythrose 4-phosphate and phosphoenolpyruvate: step 7/7. In terms of biological role, catalyzes the anti-1,4-elimination of the C-3 phosphate and the C-6 proR hydrogen from 5-enolpyruvylshikimate-3-phosphate (EPSP) to yield chorismate, which is the branch point compound that serves as the starting substrate for the three terminal pathways of aromatic amino acid biosynthesis. This reaction introduces a second double bond into the aromatic ring system. This Trichodesmium erythraeum (strain IMS101) protein is Chorismate synthase.